The primary structure comprises 422 residues: Isocitrate dehydrogenase [NADP] (422 aa).

Thr94 contributes to the NADP(+) binding site. Residues Ser103, Asn105, Arg109, Arg119, and Arg143 each contribute to the D-threo-isocitrate site. Asp310 is a binding site for Mg(2+). NADP(+) contacts are provided by residues 344-350 (HGTAPKY), Asn357, Tyr396, and Arg400.

This sequence belongs to the isocitrate and isopropylmalate dehydrogenases family. In terms of assembly, homodimer. Mg(2+) serves as cofactor. The cofactor is Mn(2+).

The enzyme catalyses D-threo-isocitrate + NADP(+) = 2-oxoglutarate + CO2 + NADPH. Functionally, catalyzes the oxidative decarboxylation of isocitrate to 2-oxoglutarate and carbon dioxide with the concomitant reduction of NADP(+). In Staphylococcus epidermidis (strain ATCC 35984 / DSM 28319 / BCRC 17069 / CCUG 31568 / BM 3577 / RP62A), this protein is Isocitrate dehydrogenase [NADP] (icd).